A 309-amino-acid chain; its full sequence is Taste receptor type 2 member 31 (309 aa).

The Extracellular portion of the chain corresponds to 1 to 2 (MI). The helical transmembrane segment at 3 to 23 (TFLPIIFSILVVVTFVIGNFA) threads the bilayer. At 24 to 55 (NGFIALVNSTEWVKRQKISFADQILTALAVSR) the chain is on the cytoplasmic side. Residues 56-76 (VGLLWVLLLNWYATVLNPAFY) form a helical membrane-spanning segment. Topologically, residues 77–100 (SVEVRTTTYNVWAVTNHFSNWLAT) are extracellular. Residues 101 to 121 (SLSIFYLLKIANFSNLIFLHL) traverse the membrane as a helical segment. Topologically, residues 122–126 (KRRVK) are cytoplasmic. Residues 127–147 (NVILVMLLGPLLILACHLFMV) traverse the membrane as a helical segment. The Extracellular portion of the chain corresponds to 148 to 181 (NMNEIVRTKEYEENMTWKYILRNAIYHPGMTVTT). Residue N161 is glycosylated (N-linked (GlcNAc...) asparagine). The helical transmembrane segment at 182–202 (LQNLVPFTLTLISFLLLICSL) threads the bilayer. The Cytoplasmic segment spans residues 203-229 (CKHLKKMQLHGKGPQDPSTKVHIKALQ). Residues 230 to 250 (IVISFLLLCVIYFVSVIISIW) form a helical membrane-spanning segment. Residues 251 to 259 (SFESLGNKP) are Extracellular-facing. The helical transmembrane segment at 260–280 (VFMFCQAIRFSYPSAHPFIVI) threads the bilayer. Topologically, residues 281-309 (WGNKKLKQTFLSVLWNVRYWVKGQKPSSL) are cytoplasmic.

It belongs to the G-protein coupled receptor T2R family.

It is found in the membrane. Its function is as follows. Receptor that may play a role in the perception of bitterness and is gustducin-linked. May play a role in sensing the chemical composition of the gastrointestinal content. The activity of this receptor may stimulate alpha gustducin, mediate PLC-beta-2 activation and lead to the gating of TRPM5. The protein is Taste receptor type 2 member 31 (TAS2R31) of Papio hamadryas (Hamadryas baboon).